Here is a 113-residue protein sequence, read N- to C-terminus: U11-theraphotoxin-Hhn1a (113 aa).

A signal peptide spans 1–21 (MNTVRVTFLLVFVLAVSLGQA). A propeptide spanning residues 22–74 (DKDENRMEMQEKTEQGNSYLDFAENLLLQKLEELEAKLLEEDSEESRNSRQKR) is cleaved from the precursor. Residues 60–69 (LEEDSEESRN) are compositionally biased toward basic and acidic residues. Positions 60–83 (LEEDSEESRNSRQKRCIGEGVPCD) are disordered. 3 disulfide bridges follow: Cys75-Cys90, Cys82-Cys95, and Cys89-Cys110.

This sequence belongs to the neurotoxin 14 (magi-1) family. 01 (HNTX-16) subfamily. As to expression, expressed by the venom gland.

The protein resides in the secreted. Its function is as follows. Probable ion channel inhibitor. The protein is U11-theraphotoxin-Hhn1a of Cyriopagopus hainanus (Chinese bird spider).